We begin with the raw amino-acid sequence, 758 residues long: 5-methyltetrahydropteroyltriglutamate--homocysteine methyltransferase (758 aa).

Residues 15 to 18 and lysine 114 contribute to the 5-methyltetrahydropteroyltri-L-glutamate site; that span reads RELK. Residues 433–435 and glutamate 486 contribute to the L-homocysteine site; that span reads IGS. L-methionine-binding positions include 433 to 435 and glutamate 486; that span reads IGS. Residues 517–518 and tryptophan 563 contribute to the 5-methyltetrahydropteroyltri-L-glutamate site; that span reads RC. An L-homocysteine-binding site is contributed by aspartate 601. Aspartate 601 serves as a coordination point for L-methionine. Residue glutamate 607 participates in 5-methyltetrahydropteroyltri-L-glutamate binding. Residues histidine 643, cysteine 645, and glutamate 667 each contribute to the Zn(2+) site. Histidine 696 functions as the Proton donor in the catalytic mechanism. Cysteine 728 serves as a coordination point for Zn(2+).

This sequence belongs to the vitamin-B12 independent methionine synthase family. It depends on Zn(2+) as a cofactor.

The enzyme catalyses 5-methyltetrahydropteroyltri-L-glutamate + L-homocysteine = tetrahydropteroyltri-L-glutamate + L-methionine. The protein operates within amino-acid biosynthesis; L-methionine biosynthesis via de novo pathway; L-methionine from L-homocysteine (MetE route): step 1/1. In terms of biological role, catalyzes the transfer of a methyl group from 5-methyltetrahydrofolate to homocysteine resulting in methionine formation. This is 5-methyltetrahydropteroyltriglutamate--homocysteine methyltransferase from Syntrophotalea carbinolica (strain DSM 2380 / NBRC 103641 / GraBd1) (Pelobacter carbinolicus).